Consider the following 210-residue polypeptide: Chaperone protein TorD (210 aa).

The protein belongs to the TorD/DmsD family. TorD subfamily.

Its subcellular location is the cytoplasm. Its function is as follows. Involved in the biogenesis of TorA. Acts on TorA before the insertion of the molybdenum cofactor and, as a result, probably favors a conformation of the apoenzyme that is competent for acquiring the cofactor. The polypeptide is Chaperone protein TorD (Salmonella dublin (strain CT_02021853)).